Reading from the N-terminus, the 413-residue chain is Histidine--tRNA ligase (413 aa).

Belongs to the class-II aminoacyl-tRNA synthetase family. In terms of assembly, homodimer.

The protein resides in the cytoplasm. The enzyme catalyses tRNA(His) + L-histidine + ATP = L-histidyl-tRNA(His) + AMP + diphosphate + H(+). In Geobacter metallireducens (strain ATCC 53774 / DSM 7210 / GS-15), this protein is Histidine--tRNA ligase.